Consider the following 156-residue polypeptide: MSRRSTAKKRLILPDPIYNSRLVTLLINHMLKDGKKSIARSFIYEALKIIEEKKGSDPLEVLEQAVRNSTPLIEVKARRIGGSTYQVPMEVRVDRGITLALRVVNSFSLQRLGKTIAVKLANELIDAANETGNTIKKREEMHRMAEANKAFVHYRY.

It belongs to the universal ribosomal protein uS7 family. As to quaternary structure, part of the 30S ribosomal subunit.

Its subcellular location is the plastid. It is found in the cyanelle. Its function is as follows. One of the primary rRNA binding proteins, it binds directly to 16S rRNA where it nucleates assembly of the head domain of the 30S subunit. In Cyanophora paradoxa, this protein is Small ribosomal subunit protein uS7c (rps7).